The primary structure comprises 459 residues: Nuclear distribution protein nudF 1 (459 aa).

Residues 9–41 (QAEELHKSIIAYLSANNLSNAASALRGELGLSE) form the LisH domain. Positions 61–88 (TSIVRLQKKIMDLEARCGALQTELNNAT) form a coiled coil. WD repeat units follow at residues 114–155 (SHRN…TTLK), 157–197 (HTRA…KNIR), 201–240 (GHEH…CVKT), 243–282 (GHSG…NPEA), 288–349 (GHDH…LMTL), 351–390 (GHDN…KCVK), 395–440 (AHGR…PQVQ), and 442–459 (RCVV…IFAN).

It belongs to the WD repeat LIS1/nudF family. Self-associates. Interacts with nudE and dynein.

It is found in the cytoplasm. The protein resides in the cytoskeleton. Its subcellular location is the spindle pole. Positively regulates the activity of the minus-end directed microtubule motor protein dynein. May enhance dynein-mediated microtubule sliding by targeting dynein to the microtubule plus end. Required for nuclear migration during vegetative growth as well as development. Required for retrograde early endosome (EE) transport from the hyphal tip. Required for localization of dynein to the mitotic spindle poles. Recruits additional proteins to the dynein complex at SPBs. This Talaromyces marneffei (strain ATCC 18224 / CBS 334.59 / QM 7333) (Penicillium marneffei) protein is Nuclear distribution protein nudF 1.